The primary structure comprises 1494 residues: B-cell CLL/lymphoma 9-like protein (1494 aa).

2 disordered regions span residues 1 to 236 (MRIL…PPSQ) and 269 to 496 (VPRA…DMGQ). Positions 20–37 (GSPPLSPRGHCPPAPAKP) are enriched in pro residues. A phosphoserine mark is found at Ser-21 and Ser-25. Position 36 is an N6-acetyllysine (Lys-36). Composition is skewed to polar residues over residues 45 to 70 (TNHG…TCNL) and 85 to 96 (NQISPSNSSLKN). Ser-88 bears the Phosphoserine mark. Lys-108 and Lys-110 each carry N6-acetyllysine. Basic and acidic residues-rich tracts occupy residues 114–126 (ERSV…EQRE) and 134–153 (SEAK…ERKQ). 2 positions are modified to phosphoserine: Ser-116 and Ser-118. Lys-137 bears the N6-acetyllysine mark. Positions 193–207 (PGQTAQLPLSESSAP) are enriched in polar residues. Pro residues-rich tracts occupy residues 279–289 (KVPPTPEPLPL) and 299–322 (SQPP…PPEG). Residues 302–530 (PPLPPPPPAP…QEEYYEEKRR (229 aa)) are necessary for interaction with CTNNB1. The segment covering 348–360 (THPNTPTAATANN) has biased composition (low complexity). A compositionally biased stretch (basic and acidic residues) spans 396–418 (LSKEQLEHRERSLQTLRDIERLL). At Ser-421 the chain carries Phosphoserine. A Phosphothreonine modification is found at Thr-511. The residue at position 677 (Arg-677) is an Asymmetric dimethylarginine. Phosphoserine is present on residues Ser-747, Ser-810, Ser-912, Ser-923, Ser-935, Ser-939, Ser-944, Ser-972, Ser-984, Ser-988, Ser-994, Ser-1001, Ser-1007, and Ser-1014. Disordered regions lie at residues 905 to 1082 (RGLG…NPLS) and 1113 to 1206 (ELLP…PGGP). Residues 932–957 (PTLSQVHSPLVTSPSANLKSPQTPSQ) are compositionally biased toward polar residues. Over residues 974 to 993 (QVLSSSLGVRSPTGSPSRLK) the composition is skewed to polar residues. Residues 1016 to 1035 (GVSQNKQPPLSINSSSTLGN) show a composition bias toward polar residues. Low complexity predominate over residues 1046–1059 (PRNSSSAPPANPSS). Over residues 1060 to 1082 (GLMNPSLPFTSSPDPTPSQNPLS) the composition is skewed to polar residues. Residues 1119–1129 (PLLPPPPPPQG) show a composition bias toward pro residues. Residues 1133 to 1143 (GISNNQPNQMH) are compositionally biased toward polar residues. Pro residues predominate over residues 1165–1176 (HEPPPTMLPSPT). Residue Lys-1339 forms a Glycyl lysine isopeptide (Lys-Gly) (interchain with G-Cter in SUMO2) linkage.

It belongs to the BCL9 family. In terms of assembly, found in a complex with CDC73; CTNNB1 and PYGO1. Interacts with CTNNB1. Expressed in kidney, liver, lung, testis, brain, spleen, heart and skeletal muscle. Highly expressed in numerous colorectal tumors compared to corresponding non-cancerous tissues.

Its subcellular location is the nucleus. Its function is as follows. Transcriptional regulator that acts as an activator. Promotes beta-catenin transcriptional activity. Plays a role in tumorigenesis. Enhances the neoplastic transforming activity of CTNNB1. In Mus musculus (Mouse), this protein is B-cell CLL/lymphoma 9-like protein (Bcl9l).